The sequence spans 130 residues: Transcription antitermination protein NusB (130 aa).

The protein belongs to the NusB family.

Its function is as follows. Involved in transcription antitermination. Required for transcription of ribosomal RNA (rRNA) genes. Binds specifically to the boxA antiterminator sequence of the ribosomal RNA (rrn) operons. This chain is Transcription antitermination protein NusB, found in Bacillus cereus (strain B4264).